A 236-amino-acid chain; its full sequence is Purine nucleoside phosphorylase (236 aa).

His-5 is a binding site for a purine D-ribonucleoside. Phosphate contacts are provided by residues Gly-21, Arg-25, Arg-43, and 86-89; that span reads RYGT. A purine D-ribonucleoside contacts are provided by residues Glu-163, 180 to 182, and 204 to 205; these read EME and SD.

The protein belongs to the PNP/UDP phosphorylase family. As to quaternary structure, homohexamer; disulfide-linked. Trimer of homodimers, with three symmetric intersubunit disulfide bonds linking the dimers to one another.

The enzyme catalyses S-methyl-5'-thioadenosine + phosphate = 5-(methylsulfanyl)-alpha-D-ribose 1-phosphate + adenine. It carries out the reaction a purine D-ribonucleoside + phosphate = a purine nucleobase + alpha-D-ribose 1-phosphate. The catalysed reaction is a purine 2'-deoxy-D-ribonucleoside + phosphate = a purine nucleobase + 2-deoxy-alpha-D-ribose 1-phosphate. Its pathway is purine metabolism; purine nucleoside salvage. In terms of biological role, cleavage of guanosine or inosine to respective bases and sugar-1-phosphate molecules. Cleaves inosine, guanosine, and adenosine with a better efficiency than MTA. This is Purine nucleoside phosphorylase from Saccharolobus solfataricus (strain ATCC 35092 / DSM 1617 / JCM 11322 / P2) (Sulfolobus solfataricus).